The primary structure comprises 185 residues: ATP synthase subunit b, chloroplastic (185 aa).

The chain crosses the membrane as a helical span at residues 31–53 (IINITVVLGILIYFGKGVLSNLL).

This sequence belongs to the ATPase B chain family. In terms of assembly, F-type ATPases have 2 components, F(1) - the catalytic core - and F(0) - the membrane proton channel. F(1) has five subunits: alpha(3), beta(3), gamma(1), delta(1), epsilon(1). F(0) has four main subunits: a(1), b(1), b'(1) and c(10-14). The alpha and beta chains form an alternating ring which encloses part of the gamma chain. F(1) is attached to F(0) by a central stalk formed by the gamma and epsilon chains, while a peripheral stalk is formed by the delta, b and b' chains.

It is found in the plastid. The protein resides in the chloroplast thylakoid membrane. Its function is as follows. F(1)F(0) ATP synthase produces ATP from ADP in the presence of a proton or sodium gradient. F-type ATPases consist of two structural domains, F(1) containing the extramembraneous catalytic core and F(0) containing the membrane proton channel, linked together by a central stalk and a peripheral stalk. During catalysis, ATP synthesis in the catalytic domain of F(1) is coupled via a rotary mechanism of the central stalk subunits to proton translocation. Component of the F(0) channel, it forms part of the peripheral stalk, linking F(1) to F(0). This Gnetum parvifolium (Small-leaved jointfir) protein is ATP synthase subunit b, chloroplastic.